A 145-amino-acid chain; its full sequence is uncharacterized protein (145 aa).

This is an uncharacterized protein from Sinorhizobium fredii (strain NBRC 101917 / NGR234).